Reading from the N-terminus, the 64-residue chain is Large ribosomal subunit protein bL35 (64 aa).

Positions 1–28 (MPKMKTHSGAKKRFKLTGSGKLKRQQAN) are disordered.

Belongs to the bacterial ribosomal protein bL35 family.

The polypeptide is Large ribosomal subunit protein bL35 (Renibacterium salmoninarum (strain ATCC 33209 / DSM 20767 / JCM 11484 / NBRC 15589 / NCIMB 2235)).